A 599-amino-acid polypeptide reads, in one-letter code: Elongation factor 4 (599 aa).

One can recognise a tr-type G domain in the interval 3–185 (KNIRNFSIIA…AIVERIPPPS (183 aa)). Residues 15-20 (DHGKST) and 132-135 (NKID) contribute to the GTP site.

This sequence belongs to the TRAFAC class translation factor GTPase superfamily. Classic translation factor GTPase family. LepA subfamily.

It localises to the cell membrane. The enzyme catalyses GTP + H2O = GDP + phosphate + H(+). Required for accurate and efficient protein synthesis under certain stress conditions. May act as a fidelity factor of the translation reaction, by catalyzing a one-codon backward translocation of tRNAs on improperly translocated ribosomes. Back-translocation proceeds from a post-translocation (POST) complex to a pre-translocation (PRE) complex, thus giving elongation factor G a second chance to translocate the tRNAs correctly. Binds to ribosomes in a GTP-dependent manner. The chain is Elongation factor 4 from Syntrophomonas wolfei subsp. wolfei (strain DSM 2245B / Goettingen).